The sequence spans 247 residues: Chloride intracellular channel protein 2 (247 aa).

An N-terminal region spans residues 1–94 (MSGLRPGTQV…KIEEFLEQTL (94 aa)). A required for insertion into the membrane region spans residues 1 to 96 (MSGLRPGTQV…EEFLEQTLAP (96 aa)). Glutathione is bound at residue E25. Positions 30 to 33 (CPFC) match the G-site motif. A disulfide bridge connects residues C30 and C33. The helical transmembrane segment at 32–52 (FCQRLFMILWLKGVKFNVTTV) threads the bilayer. The GST C-terminal domain occupies 76–239 (NKELKTDFIK…PEDKEIENTY (164 aa)). The joint loop stretch occupies residues 95–106 (APPRYPHLSPKY). Positions 107–247 (KESFDVGCNL…TYANVAKQKS (141 aa)) are C-terminal. The tract at residues 151–171 (NTPLLDEIDPDSAEEPPVSRR) is foot loop. H227 contacts glutathione.

It belongs to the chloride channel CLIC family. Monomer. Interacts with TRAPPC2 and RYR2. As to expression, expressed in adult and fetal brain, heart, skeletal muscle, liver, lung, and spleen. Detected in adult stomach and testis. Expressed in fetal thymus and kidney.

Its subcellular location is the cytoplasm. It localises to the membrane. It carries out the reaction chloride(in) = chloride(out). The enzyme catalyses tert-butyl hydroperoxide + 2 glutathione = tert-butanol + glutathione disulfide + H2O. The catalysed reaction is cumene hydroperoxide + 2 glutathione = 2-phenylpropan-2-ol + glutathione disulfide + H2O. Its activity is regulated as follows. The channel conductance is regulated by pH. In the soluble state, catalyzes glutaredoxin-like thiol disulfide exchange reactions with reduced glutathione as electron donor. Displays weak glutathione peroxidase activity. Can insert into membranes and form chloride ion channels. Membrane insertion seems to be redox-regulated and may occur only under oxidizing conditions. Modulates the activity of RYR2 and inhibits calcium influx. In Homo sapiens (Human), this protein is Chloride intracellular channel protein 2.